A 182-amino-acid polypeptide reads, in one-letter code: MNIRCARVDDLMSMQNANLMCLPENYQMKYYFYHALSWPQLSYIAEDHKGNVVGYVLAKMEEDPGEEPHGHITSLAVKRSYRRLGLANKMMDQTARAMVETYNAKYVSLHVRVSNRAALNLYKNTLKFEIVDTEPKYYADGEDAYAMRRDLAKWAEERNIEPADREAYTTAKTTDDKKKNRS.

The N-acetyltransferase domain occupies 1 to 152 (MNIRCARVDD…DAYAMRRDLA (152 aa)). The segment at 162–182 (PADREAYTTAKTTDDKKKNRS) is disordered.

This sequence belongs to the acetyltransferase family. ARD1 subfamily. In terms of assembly, component of the N-terminal acetyltransferase A (NatA) complex. Expressed in head and tail hypodermal cells, hypodermal seam cells, pharynx, intestine and head and tail neurons.

It catalyses the reaction N-terminal glycyl-[protein] + acetyl-CoA = N-terminal N(alpha)-acetylglycyl-[protein] + CoA + H(+). The enzyme catalyses N-terminal L-alanyl-[protein] + acetyl-CoA = N-terminal N(alpha)-acetyl-L-alanyl-[protein] + CoA + H(+). It carries out the reaction N-terminal L-seryl-[protein] + acetyl-CoA = N-terminal N(alpha)-acetyl-L-seryl-[protein] + CoA + H(+). The catalysed reaction is N-terminal L-valyl-[protein] + acetyl-CoA = N-terminal N(alpha)-acetyl-L-valyl-[protein] + CoA + H(+). It catalyses the reaction N-terminal L-cysteinyl-[protein] + acetyl-CoA = N-terminal N(alpha)-acetyl-L-cysteinyl-[protein] + CoA + H(+). The enzyme catalyses N-terminal L-threonyl-[protein] + acetyl-CoA = N-terminal N(alpha)-acetyl-L-threonyl-[protein] + CoA + H(+). Its function is as follows. Catalytic subunit of the N-terminal acetyltransferase A (NatA) complex which displays alpha (N-terminal) acetyltransferase activity. Plays a role in regulating larval development, metabolism and longevity. Functions downstream or alongside daf-3, daf-12 and daf-16 in the dauer formation pathway. Functions upstream of daf-15 to enable animal development. The protein is N-alpha-acetyltransferase daf-31 of Caenorhabditis elegans.